Here is a 25-residue protein sequence, read N- to C-terminus: Small ribosomal subunit protein eS32B (25 aa).

The tract at residues 1–25 is disordered; the sequence is MRAKWRKKRTRRLKRKRRKVRARSK.

It belongs to the eukaryotic ribosomal protein eS32 family. In terms of assembly, component of the small ribosomal subunit (SSU). Mature yeast ribosomes consist of a small (40S) and a large (60S) subunit. The 40S small subunit contains 1 molecule of ribosomal RNA (18S rRNA) and 33 different proteins (encoded by 57 genes). The large 60S subunit contains 3 rRNA molecules (25S, 5.8S and 5S rRNA) and 46 different proteins (encoded by 81 genes).

It localises to the cytoplasm. In terms of biological role, component of the ribosome, a large ribonucleoprotein complex responsible for the synthesis of proteins in the cell. The small ribosomal subunit (SSU) binds messenger RNAs (mRNAs) and translates the encoded message by selecting cognate aminoacyl-transfer RNA (tRNA) molecules. The large subunit (LSU) contains the ribosomal catalytic site termed the peptidyl transferase center (PTC), which catalyzes the formation of peptide bonds, thereby polymerizing the amino acids delivered by tRNAs into a polypeptide chain. The nascent polypeptides leave the ribosome through a tunnel in the LSU and interact with protein factors that function in enzymatic processing, targeting, and the membrane insertion of nascent chains at the exit of the ribosomal tunnel. This Saccharomyces cerevisiae (strain ATCC 204508 / S288c) (Baker's yeast) protein is Small ribosomal subunit protein eS32B.